The chain runs to 444 residues: tRNA modification GTPase MnmE (444 aa).

The (6S)-5-formyl-5,6,7,8-tetrahydrofolate site is built by Arg-25, Glu-83, and Lys-122. Positions 218–370 (GFKVAIVGKP…IVGRLRDYLD (153 aa)) constitute a TrmE-type G domain. Residues 228–233 (NVGKSS), 247–253 (SDEAGTT), and 272–275 (DTAG) contribute to the GTP site. Mg(2+)-binding residues include Ser-232 and Thr-253. Lys-444 contacts (6S)-5-formyl-5,6,7,8-tetrahydrofolate.

This sequence belongs to the TRAFAC class TrmE-Era-EngA-EngB-Septin-like GTPase superfamily. TrmE GTPase family. In terms of assembly, homodimer. Heterotetramer of two MnmE and two MnmG subunits. It depends on K(+) as a cofactor.

It is found in the cytoplasm. Its function is as follows. Exhibits a very high intrinsic GTPase hydrolysis rate. Involved in the addition of a carboxymethylaminomethyl (cmnm) group at the wobble position (U34) of certain tRNAs, forming tRNA-cmnm(5)s(2)U34. The chain is tRNA modification GTPase MnmE from Campylobacter curvus (strain 525.92).